A 258-amino-acid polypeptide reads, in one-letter code: NAD-capped RNA hydrolase NudC (258 aa).

Residue arginine 69 coordinates substrate. Zn(2+) contacts are provided by cysteine 98 and cysteine 101. Position 111 (glutamate 111) interacts with substrate. Zn(2+) is bound by residues cysteine 116 and cysteine 119. A substrate-binding site is contributed by tyrosine 124. Residues 125–248 enclose the Nudix hydrolase domain; the sequence is PQIAPCIIVA…TVARRLIEDT (124 aa). Positions 158, 174, and 178 each coordinate a divalent metal cation. The Nudix box motif lies at 159-180; that stretch reads GFVEVGETLEQTVAREVMEESG. Residue 192 to 199 coordinates substrate; it reads QPWPFPMS. An a divalent metal cation-binding site is contributed by glutamate 219. Alanine 241 provides a ligand contact to substrate.

Belongs to the Nudix hydrolase family. NudC subfamily. Homodimer. The cofactor is Mg(2+). Requires Mn(2+) as cofactor. It depends on Zn(2+) as a cofactor.

It catalyses the reaction a 5'-end NAD(+)-phospho-ribonucleoside in mRNA + H2O = a 5'-end phospho-adenosine-phospho-ribonucleoside in mRNA + beta-nicotinamide D-ribonucleotide + 2 H(+). The enzyme catalyses NAD(+) + H2O = beta-nicotinamide D-ribonucleotide + AMP + 2 H(+). The catalysed reaction is NADH + H2O = reduced beta-nicotinamide D-ribonucleotide + AMP + 2 H(+). In terms of biological role, mRNA decapping enzyme that specifically removes the nicotinamide adenine dinucleotide (NAD) cap from a subset of mRNAs by hydrolyzing the diphosphate linkage to produce nicotinamide mononucleotide (NMN) and 5' monophosphate mRNA. The NAD-cap is present at the 5'-end of some mRNAs and stabilizes RNA against 5'-processing. Has preference for mRNAs with a 5'-end purine. Catalyzes the hydrolysis of a broad range of dinucleotide pyrophosphates. In Enterobacter sp. (strain 638), this protein is NAD-capped RNA hydrolase NudC.